The primary structure comprises 331 residues: Tryptophan--tRNA ligase (331 aa).

Residues 10–12 and 18–19 each bind ATP; these read QPS and GN. The short motif at 11-19 is the 'HIGH' region element; sequence PSGQLTLGN. Asp-133 provides a ligand contact to L-tryptophan. ATP is bound by residues 145–147, Val-184, and 193–197; these read GED and KMSKS. A 'KMSKS' region motif is present at residues 193 to 197; the sequence is KMSKS.

This sequence belongs to the class-I aminoacyl-tRNA synthetase family. As to quaternary structure, homodimer.

It is found in the cytoplasm. It carries out the reaction tRNA(Trp) + L-tryptophan + ATP = L-tryptophyl-tRNA(Trp) + AMP + diphosphate + H(+). Its function is as follows. Catalyzes the attachment of tryptophan to tRNA(Trp). The chain is Tryptophan--tRNA ligase from Listeria innocua serovar 6a (strain ATCC BAA-680 / CLIP 11262).